The chain runs to 245 residues: tRNA pseudouridine synthase A (245 aa).

The active-site Nucleophile is the Asp52. Tyr111 contributes to the substrate binding site.

Belongs to the tRNA pseudouridine synthase TruA family. Homodimer.

It carries out the reaction uridine(38/39/40) in tRNA = pseudouridine(38/39/40) in tRNA. In terms of biological role, formation of pseudouridine at positions 38, 39 and 40 in the anticodon stem and loop of transfer RNAs. The polypeptide is tRNA pseudouridine synthase A (Zymomonas mobilis subsp. mobilis (strain ATCC 31821 / ZM4 / CP4)).